A 161-amino-acid polypeptide reads, in one-letter code: Transcriptional regulator MraZ (161 aa).

2 consecutive SpoVT-AbrB domains span residues 7-55 and 84-127; these read RYTN…GPAF and SAEL…EPGA.

It belongs to the MraZ family. In terms of assembly, forms oligomers.

It localises to the cytoplasm. The protein resides in the nucleoid. This chain is Transcriptional regulator MraZ, found in Parvibaculum lavamentivorans (strain DS-1 / DSM 13023 / NCIMB 13966).